The following is a 161-amino-acid chain: MTILVLFLSCAALASAECCSRGDAEVVISEWDQVFNAAMAGSSESAVGVAIFDAFFASSGVSPSMFPGGGDSNNPEFLAQVSRVVSGADIAINSLTNRATCDSLLSHLNAQHRAISGVTGAAVTHLSQAISSVVAQVLPSAHIDAWEYCMAYIAAGIGAGL.

The signal sequence occupies residues 1-16; that stretch reads MTILVLFLSCAALASA. One can recognise a Globin domain in the interval 18–161; sequence CCSRGDAEVV…YIAAGIGAGL (144 aa). C19 and C149 are oxidised to a cystine. Residue H112 participates in heme b binding.

The protein belongs to the globin family. In terms of assembly, the 400 kDa hemoglobin consists of a spherical 24-mer arranged as a double layer of dome-shaped dodecamers. Each dodecamer is composed of the 3-fold trimer of the tetramer A1-A2-B1-B2 having one intra-tetramer (A1-B2) disulfide bond and one inter-tetramer (B1-B2) disulfide bond per tetramer.

The protein resides in the secreted. In terms of biological role, the extracellular giant hemoglobin is able to bind and transport oxygen and sulfide simultaneously and reversibly at two different sites. The protein is Extracellular giant hemoglobin major globin subunit B1 (ghbB1) of Oligobrachia mashikoi (Beard worm).